A 319-amino-acid chain; its full sequence is Probable alcohol dehydrogenase (319 aa).

7 residues coordinate Zn(2+): Cys18, His39, Cys68, Cys71, Cys74, Cys82, and Cys149.

The protein belongs to the zinc-containing alcohol dehydrogenase family. Zn(2+) serves as cofactor.

It carries out the reaction a primary alcohol + NAD(+) = an aldehyde + NADH + H(+). The enzyme catalyses a secondary alcohol + NAD(+) = a ketone + NADH + H(+). The protein is Probable alcohol dehydrogenase (terPD) of Pseudomonas sp.